A 66-amino-acid polypeptide reads, in one-letter code: Alpha-like toxin Bom3 (66 aa).

Residues 2-66 (RDGYIAQPEN…PIVVGGEKCH (65 aa)) enclose the LCN-type CS-alpha/beta domain. Intrachain disulfides connect Cys-12-Cys-65, Cys-16-Cys-37, Cys-23-Cys-47, and Cys-27-Cys-49.

The protein belongs to the long (4 C-C) scorpion toxin superfamily. Sodium channel inhibitor family. Alpha subfamily. As to expression, expressed by the venom gland.

Its subcellular location is the secreted. Its function is as follows. Alpha toxins bind voltage-independently at site-3 of sodium channels (Nav) and inhibit the inactivation of the activated channels, thereby blocking neuronal transmission. As it competes neither with the classical alpha-toxin AaH2 nor the beta-toxin Css2, this toxin is an alpha-like toxin. The protein is Alpha-like toxin Bom3 of Buthus occitanus mardochei (Moroccan scorpion).